Here is a 522-residue protein sequence, read N- to C-terminus: MPYLLMASHNPLPAGKQLLLLVLLCAFFSSSFIPFASCSITDDLQTQCLKVSATEFAGSLKDTIDAVQQVASILSQFANAFGDFRLANAISDCLDLLDFSADELNWSLSASQNQKGKNNSTGKLSSDLRTWLSAALVNQDTCSNGFEGTNSIVQGLISAGLGQVTSLVQELLTQVHPNSNQQGPNGQIPSWVKTKDRKLLQADGVSVDAIVAQDGTGNFTNVTDAVLAAPDYSMRRYVIYIKRGTYKENVEIKKKKWNLMMIGDGMDATIISGNRSFVDGWTTFRSATFAVSGRGFIARDITFENTAGPEKHQAVALRSDSDLSVFYRCNIRGYQDTLYTHTMRQFYRDCKISGTVDFIFGDATVVFQNCQILAKKGLPNQKNSITAQGRKDPNEPTGISIQFCNITADSDLEAASVNSTPTYLGRPWKLYSRTVIMQSFLSNVIRPEGWLEWNGDFALNSLFYGEYMNYGPGAGLGSRVKWPGYQVFNESTQAKNYTVAQFIEGNLWLPSTGVKYTAEFGV.

Positions 1–30 are cleaved as a signal peptide; sequence MPYLLMASHNPLPAGKQLLLLVLLCAFFSS. Positions 31-174 are pectinesterase inhibitor PPE8B; it reads SFIPFASCSI…TSLVQELLTQ (144 aa). Residues Asn105, Asn118, Asn119, Asn218, Asn221, and Asn274 are each glycosylated (N-linked (GlcNAc...) asparagine). The interval 208–506 is pectinesterase PPE8B; sequence DAIVAQDGTG…YTVAQFIEGN (299 aa). Residues Thr283 and Gln313 each coordinate substrate. The Proton donor; for pectinesterase activity role is filled by Asp336. Cys350 and Cys370 are joined by a disulfide. Catalysis depends on Asp357, which acts as the Nucleophile; for pectinesterase activity. A glycan (N-linked (GlcNAc...) asparagine) is linked at Asn405. Residues Arg426 and Trp428 each coordinate substrate. Asn489 and Asn496 each carry an N-linked (GlcNAc...) asparagine glycan.

It in the N-terminal section; belongs to the PMEI family. The protein in the C-terminal section; belongs to the pectinesterase family.

It is found in the secreted. It localises to the cell wall. It carries out the reaction [(1-&gt;4)-alpha-D-galacturonosyl methyl ester](n) + n H2O = [(1-&gt;4)-alpha-D-galacturonosyl](n) + n methanol + n H(+). It functions in the pathway glycan metabolism; pectin degradation; 2-dehydro-3-deoxy-D-gluconate from pectin: step 1/5. May have roles in the deposition of pectin in developing tissues and in the wall loosening and cell separation that occurs in cell expansion, fruit ripening and abscission. This chain is Pectinesterase/pectinesterase inhibitor PPE8B, found in Prunus persica (Peach).